We begin with the raw amino-acid sequence, 197 residues long: Protein GrpE (197 aa).

The tract at residues methionine 1–proline 39 is disordered.

It belongs to the GrpE family. Homodimer.

It localises to the cytoplasm. Participates actively in the response to hyperosmotic and heat shock by preventing the aggregation of stress-denatured proteins, in association with DnaK and GrpE. It is the nucleotide exchange factor for DnaK and may function as a thermosensor. Unfolded proteins bind initially to DnaJ; upon interaction with the DnaJ-bound protein, DnaK hydrolyzes its bound ATP, resulting in the formation of a stable complex. GrpE releases ADP from DnaK; ATP binding to DnaK triggers the release of the substrate protein, thus completing the reaction cycle. Several rounds of ATP-dependent interactions between DnaJ, DnaK and GrpE are required for fully efficient folding. In Escherichia coli O157:H7 (strain EC4115 / EHEC), this protein is Protein GrpE.